Here is a 283-residue protein sequence, read N- to C-terminus: ATP phosphoribosyltransferase (283 aa).

The protein belongs to the ATP phosphoribosyltransferase family. Long subfamily. Mg(2+) serves as cofactor.

Its subcellular location is the cytoplasm. It catalyses the reaction 1-(5-phospho-beta-D-ribosyl)-ATP + diphosphate = 5-phospho-alpha-D-ribose 1-diphosphate + ATP. It functions in the pathway amino-acid biosynthesis; L-histidine biosynthesis; L-histidine from 5-phospho-alpha-D-ribose 1-diphosphate: step 1/9. Its activity is regulated as follows. Feedback inhibited by histidine. Its function is as follows. Catalyzes the condensation of ATP and 5-phosphoribose 1-diphosphate to form N'-(5'-phosphoribosyl)-ATP (PR-ATP). Has a crucial role in the pathway because the rate of histidine biosynthesis seems to be controlled primarily by regulation of HisG enzymatic activity. The sequence is that of ATP phosphoribosyltransferase from Rhodococcus erythropolis (strain PR4 / NBRC 100887).